A 280-amino-acid polypeptide reads, in one-letter code: Gem-associated protein 2 (280 aa).

The may play a minor inhibitory role in snRNA binding to 5Sm (SNRPD1, SNRPD2, SNRPE, SNRPF and SNRPG) during snRNP assembly by inserting into the RNA binding pocket of 5Sm stretch occupies residues 1-39 (MRRAELAGLKTMAWVPAESAVEELMPRLLPVEPCDLTEG). Ser81 and Ser166 each carry phosphoserine.

The protein belongs to the gemin-2 family. In terms of assembly, monomer. Part of the core SMN complex that contains SMN1, GEMIN2/SIP1, DDX20/GEMIN3, GEMIN4, GEMIN5, GEMIN6, GEMIN7, GEMIN8 and STRAP/UNRIP. Part of the SMN-Sm complex that contains SMN1, GEMIN2/SIP1, DDX20/GEMIN3, GEMIN4, GEMIN5, GEMIN6, GEMIN7, GEMIN8, STRAP/UNRIP and the Sm proteins SNRPB, SNRPD1, SNRPD2, SNRPD3, SNRPE, SNRPF and SNRPG. Interacts with GEMIN5; the interaction is direct. Interacts (via C-terminus) with SMN1; the interaction is direct. Interacts with SNRPD1; the interaction is direct. Interacts with SNRPD2; the interaction is direct. Interacts (via N-terminus) with SNRPF; the interaction is direct. Interacts (via N-terminus) with SNRPE; the interaction is direct. Interacts (via N-terminus) with SNRPG; the interaction is direct.

It localises to the nucleus. The protein localises to the gem. The protein resides in the cytoplasm. Its function is as follows. The SMN complex catalyzes the assembly of small nuclear ribonucleoproteins (snRNPs), the building blocks of the spliceosome, and thereby plays an important role in the splicing of cellular pre-mRNAs. Most spliceosomal snRNPs contain a common set of Sm proteins SNRPB, SNRPD1, SNRPD2, SNRPD3, SNRPE, SNRPF and SNRPG that assemble in a heptameric protein ring on the Sm site of the small nuclear RNA to form the core snRNP (Sm core). In the cytosol, the Sm proteins SNRPD1, SNRPD2, SNRPE, SNRPF and SNRPG (5Sm) are trapped in an inactive 6S pICln-Sm complex by the chaperone CLNS1A that controls the assembly of the core snRNP. To assemble core snRNPs, the SMN complex accepts the trapped 5Sm proteins from CLNS1A. Binding of snRNA inside 5Sm ultimately triggers eviction of the SMN complex, thereby allowing binding of SNRPD3 and SNRPB to complete assembly of the core snRNP. Within the SMN complex, GEMIN2 constrains the conformation of 5Sm, thereby promoting 5Sm binding to snRNA containing the snRNP code (a nonameric Sm site and a 3'-adjacent stem-loop), thus preventing progression of assembly until a cognate substrate is bound. The chain is Gem-associated protein 2 from Homo sapiens (Human).